The sequence spans 364 residues: Metalloendoproteinase 1-MMP (364 aa).

The N-terminal stretch at 1 to 28 (MSRNLIYRRNRALCFVLILFCFPYRFGA) is a signal peptide. The propeptide at 29–149 (RNTPEAEQST…NNDFLHTTAH (121 aa)) is activation peptide. Asn-49 is a glycosylation site (N-linked (GlcNAc...) asparagine). Positions 128-135 (PRCGVSDT) match the Cysteine switch motif. Cys-130 contacts Zn(2+). Asp-211 contacts Ca(2+). Residues His-221 and Asp-223 each contribute to the Zn(2+) site. Ca(2+)-binding residues include Asp-228 and Gly-229. His-236 lines the Zn(2+) pocket. Residue Gly-243 coordinates Ca(2+). His-246 is a binding site for Zn(2+). Residues Asp-248 and Glu-251 each coordinate Ca(2+). His-275 is a Zn(2+) binding site. The active site involves Glu-276. Residues His-279 and His-285 each contribute to the Zn(2+) site. Asn-338 carries an N-linked (GlcNAc...) asparagine glycan. The GPI-anchor amidated glycine moiety is linked to residue Gly-339. The propeptide at 340 to 364 (TVSHRFLSGNFIGYVLLVVGLILFL) is removed in mature form.

This sequence belongs to the peptidase M10A family. Matrix metalloproteinases (MMPs) subfamily. Ca(2+) is required as a cofactor. It depends on Zn(2+) as a cofactor. As to expression, mostly expressed in flowers, roots and stems, and, to a lower extent, in leaves.

The protein resides in the cell membrane. Inhibited by human TIMP-1 and TIMP-2 and by the peptide hydroxamate inhibitor (BB-94). Repressed by acetohydroxamic acid (AHA). Matrix metalloproteinases (MMPs) or matrixins may play a role in the degradation and remodeling of the extracellular matrix (ECM) during development or in response to stresses. Can cleave myelin basic protein as well as fluorigenic peptide substrates, McaPLANvaDpaAR-NH(2) and McaPChaGNvaHADpa-NH(2) 4-fold more efficiently than McaPLGLDpaAR-NH(2) (QF24). Active on myelin basic protein (MBP) and, to some extent, on McaPLGLDpaAR-NH(2) (QF24) and beta-casein. The protein is Metalloendoproteinase 1-MMP of Arabidopsis thaliana (Mouse-ear cress).